The chain runs to 72 residues: Large ribosomal subunit protein bL32c (72 aa).

Residues 49-72 are disordered; the sequence is PPAPVSENWDDEAKGFGKDLDAAE. A compositionally biased stretch (basic and acidic residues) spans 59–72; the sequence is DEAKGFGKDLDAAE.

The protein belongs to the bacterial ribosomal protein bL32 family.

Its subcellular location is the plastid. The protein localises to the chloroplast. The chain is Large ribosomal subunit protein bL32c from Ostreococcus tauri.